The sequence spans 152 residues: MNTPMSLSAARGRMLPFLEKEKSEEESETLESSLLQLIDDNRRSSLQLREKTERSRKEAIRHAARTADLLVKAVNGGVEECFVNEKRIESEIRNLAITVAKFGKQTDQWLAVTHAVNSAVKEIGDFENWMKTMEFDCKKITAAIRNIHEDQQ.

This sequence belongs to the BLOC1S1 family. Component of the biogenesis of lysosome-related organelles complex-1 (BLOC-1). Interacts with BLOS2 and SNX1. Expressed in the whole plant (at protein level).

The protein resides in the cytoplasm. The protein localises to the endosome. In terms of biological role, component of the biogenesis of lysosome-related organelles complex-1 (BLOC-1), a complex that mediates the vacuolar degradative transport via the intracellular vesicle trafficking from the endosome to the vacuole. Probably regulates the PIN1 and PIN2 homeostasis through its interaction with SNX1. This chain is Biogenesis of lysosome-related organelles complex 1 subunit 1 (BLOS1), found in Arabidopsis thaliana (Mouse-ear cress).